Here is a 149-residue protein sequence, read N- to C-terminus: Ribosomal RNA large subunit methyltransferase H (149 aa).

S-adenosyl-L-methionine is bound by residues L71, G98, and 117-122 (LSKMTL).

This sequence belongs to the RNA methyltransferase RlmH family. Homodimer.

The protein localises to the cytoplasm. It catalyses the reaction pseudouridine(1915) in 23S rRNA + S-adenosyl-L-methionine = N(3)-methylpseudouridine(1915) in 23S rRNA + S-adenosyl-L-homocysteine + H(+). Functionally, specifically methylates the pseudouridine at position 1915 (m3Psi1915) in 23S rRNA. This Campylobacter fetus subsp. fetus (strain 82-40) protein is Ribosomal RNA large subunit methyltransferase H.